The chain runs to 124 residues: MNVLLIFLGCGAGGVARYGVSNLMYLLMGKQFPIGTLIVNITGSLLMGILFIFILERLSGNIQLWRSLLLIGFLGGYTTFSSFSIETFNLIEAGHYFGAALNVLLSVALCIAGAWLGVLIGRQL.

A run of 4 helical transmembrane segments spans residues 3–23 (VLLIFLGCGAGGVARYGVSNL), 34–54 (IGTLIVNITGSLLMGILFIFI), 68–88 (LLLIGFLGGYTTFSSFSIETF), and 100–120 (ALNVLLSVALCIAGAWLGVLI). Residues Gly75 and Thr78 each coordinate Na(+).

It belongs to the fluoride channel Fluc/FEX (TC 1.A.43) family.

Its subcellular location is the cell inner membrane. It catalyses the reaction fluoride(in) = fluoride(out). Na(+) is not transported, but it plays an essential structural role and its presence is essential for fluoride channel function. In terms of biological role, fluoride-specific ion channel. Important for reducing fluoride concentration in the cell, thus reducing its toxicity. The sequence is that of Fluoride-specific ion channel FluC from Coxiella burnetii (strain Dugway 5J108-111).